The following is a 680-amino-acid chain: Nodulation protein NolNO (680 aa).

Belongs to the NodU/CmcH family.

It localises to the cytoplasm. In terms of biological role, involved in the O-carbamoylation of nod factors. The protein is Nodulation protein NolNO (nolO) of Sinorhizobium fredii (strain NBRC 101917 / NGR234).